A 613-amino-acid polypeptide reads, in one-letter code: Acetylcholinesterase (613 aa).

An N-terminal signal peptide occupies residues 1-30; the sequence is MRPPWCPLHTPSLTPPLLLLLFLIGGGAEA. Asn-91 is a glycosylation site (N-linked (GlcNAc...) asparagine). Residues Cys-99 and Cys-126 are joined by a disulfide bond. Ser-233 (acyl-ester intermediate) is an active-site residue. A disulfide bridge connects residues Cys-287 and Cys-302. A glycan (N-linked (GlcNAc...) asparagine) is linked at Asn-295. Glu-364 acts as the Charge relay system in catalysis. Asn-380 is a glycosylation site (N-linked (GlcNAc...) asparagine). A disulfide bridge connects residues Cys-439 and Cys-559. His-477 functions as the Charge relay system in the catalytic mechanism. N-linked (GlcNAc...) asparagine glycosylation occurs at Asn-494.

Belongs to the type-B carboxylesterase/lipase family. Interacts with PRIMA1. The interaction with PRIMA1 is required to anchor it to the basal lamina of cells and organize into tetramers. Isoform H generates GPI-anchored dimers; disulfide linked. Isoform T generates multiple structures, ranging from monomers and dimers to collagen-tailed and hydrophobic-tailed forms, in which catalytic tetramers are associated with anchoring proteins that attach them to the basal lamina or to cell membranes. In the collagen-tailed forms, isoform T subunits are associated with a specific collagen, COLQ, which triggers the formation of isoform T tetramers, from monomers and dimers.

It localises to the synapse. It is found in the secreted. Its subcellular location is the cell membrane. It carries out the reaction acetylcholine + H2O = choline + acetate + H(+). Its function is as follows. Terminates signal transduction at the neuromuscular junction by rapid hydrolysis of the acetylcholine released into the synaptic cleft. This Bos taurus (Bovine) protein is Acetylcholinesterase (ACHE).